Here is a 527-residue protein sequence, read N- to C-terminus: Sensory neuron membrane protein 1 (527 aa).

Over 1-10 (MQLQKPLKIG) the chain is Cytoplasmic. A helical membrane pass occupies residues 11 to 31 (LGMMGAGLFGIIFGWVLFPVI). Over 32–456 (LKSQLKKEMA…LKNQLFIPKR (425 aa)) the chain is Extracellular. N-linked (GlcNAc...) asparagine glycosylation is found at N67 and N229. Intrachain disulfides connect C268/C333, C297/C352, and C335/C341. N440 carries N-linked (GlcNAc...) asparagine glycosylation. Residues 457–477 (IVSVVKWLLAGVGFVGLVGSL) form a helical membrane-spanning segment. Topologically, residues 478 to 527 (VYQFKGKMINFALSPSSAPVTKVNPEINQQNQPKDISIIGESQNPPKVDM) are cytoplasmic.

The protein belongs to the CD36 family. As to expression, principal component of the olfactory cilia membrane. Localizes to the antennal tissue with two to three fold higher expression in males compared to females.

The protein resides in the cell membrane. Its function is as follows. Plays an olfactory role that is not restricted to pheromone sensitivity. The protein is Sensory neuron membrane protein 1 of Ostrinia nubilalis (European corn borer).